A 363-amino-acid chain; its full sequence is Protein-glutamate methylesterase/protein-glutamine glutaminase 1 (363 aa).

One can recognise a Response regulatory domain in the interval 7–124; that stretch reads KVLIVDDSAL…SRGMQEYARE (118 aa). Asp58 bears the 4-aspartylphosphate mark. A CheB-type methylesterase domain is found at 164–356; it reads FSSTEKIIVI…RRLFGWLESQ (193 aa). Residues Ser176, His202, and Asp298 contribute to the active site.

Belongs to the CheB family. Phosphorylated by CheA. Phosphorylation of the N-terminal regulatory domain activates the methylesterase activity.

It localises to the cytoplasm. The enzyme catalyses [protein]-L-glutamate 5-O-methyl ester + H2O = L-glutamyl-[protein] + methanol + H(+). The catalysed reaction is L-glutaminyl-[protein] + H2O = L-glutamyl-[protein] + NH4(+). In terms of biological role, involved in chemotaxis. Part of a chemotaxis signal transduction system that modulates chemotaxis in response to various stimuli. Catalyzes the demethylation of specific methylglutamate residues introduced into the chemoreceptors (methyl-accepting chemotaxis proteins or MCP) by CheR. Also mediates the irreversible deamidation of specific glutamine residues to glutamic acid. The polypeptide is Protein-glutamate methylesterase/protein-glutamine glutaminase 1 (Geobacter metallireducens (strain ATCC 53774 / DSM 7210 / GS-15)).